The following is a 257-amino-acid chain: MMHSKKLMLGICLVLLIILIVGYVIMTKINSRSAQIKDTFNQTLKLYPTKNLEDFYDKEGFRDQEFEKGDKGNWIVDSEMVIELKDKKMESRSMVLYINRNTRTTKGNFIVRELWEDSKGYAQSKDTKYPVKMEHNRIIPTKPIADDKLRKEIENFKFFVQYGDFKDINDYKDGDISYNPNVPSYSAKYQLKNDDYNVKQLRKRYNIPTNKAPKLLLKGDGDLKGSSIGSKNLEFTFVENKEENIYFSDSINFKPTE.

The chain crosses the membrane as a helical span at residues Leu7–Thr27.

It belongs to the staphylococcal tandem lipoprotein family.

The protein localises to the cell membrane. This is an uncharacterized protein from Staphylococcus aureus (strain Mu50 / ATCC 700699).